Reading from the N-terminus, the 321-residue chain is uncharacterized protein (321 aa).

This is an uncharacterized protein from Archaeoglobus fulgidus (strain ATCC 49558 / DSM 4304 / JCM 9628 / NBRC 100126 / VC-16).